The sequence spans 639 residues: Probable methyltransferase PMT18 (639 aa).

The Cytoplasmic portion of the chain corresponds to 1-19; sequence MAKENSSHSLAEAKRKRLT. The chain crosses the membrane as a helical; Signal-anchor for type II membrane protein span at residues 20-42; that stretch reads WILCVSGLCILSYVLGSWQTNTV. A disordered region spans residues 41–86; sequence TVPTSSSEAYSRMGCDETSTTTRAQTTQTQTNPSSDDTSSSLSSSE. The Lumenal portion of the chain corresponds to 43 to 639; that stretch reads PTSSSEAYSR…VKSYWTGPSS (597 aa). Over residues 58 to 85 the composition is skewed to low complexity; sequence TSTTTRAQTTQTQTNPSSDDTSSSLSSS. Residues Asn-104 and Asn-427 are each glycosylated (N-linked (GlcNAc...) asparagine).

It belongs to the methyltransferase superfamily.

The protein localises to the endoplasmic reticulum membrane. This Arabidopsis thaliana (Mouse-ear cress) protein is Probable methyltransferase PMT18.